The sequence spans 315 residues: Methionyl-tRNA formyltransferase (315 aa).

A (6S)-5,6,7,8-tetrahydrofolate-binding site is contributed by 113-116; that stretch reads SLLP.

This sequence belongs to the Fmt family.

It catalyses the reaction L-methionyl-tRNA(fMet) + (6R)-10-formyltetrahydrofolate = N-formyl-L-methionyl-tRNA(fMet) + (6S)-5,6,7,8-tetrahydrofolate + H(+). Functionally, attaches a formyl group to the free amino group of methionyl-tRNA(fMet). The formyl group appears to play a dual role in the initiator identity of N-formylmethionyl-tRNA by promoting its recognition by IF2 and preventing the misappropriation of this tRNA by the elongation apparatus. The chain is Methionyl-tRNA formyltransferase from Pseudoalteromonas atlantica (strain T6c / ATCC BAA-1087).